We begin with the raw amino-acid sequence, 534 residues long: CTP synthase (534 aa).

An amidoligase domain region spans residues 1-267 (MTKYIFVTGG…DQIVCDHLKL (267 aa)). Ser-13 is a CTP binding site. Ser-13 is a UTP binding site. 14–19 (SIGKGI) contacts ATP. Residue Tyr-54 coordinates L-glutamine. Residue Asp-71 participates in ATP binding. Mg(2+) contacts are provided by Asp-71 and Glu-141. CTP is bound by residues 148-150 (DIE), 188-193 (KTKPTQ), and Lys-224. UTP contacts are provided by residues 188–193 (KTKPTQ) and Lys-224. The Glutamine amidotransferase type-1 domain maps to 292-534 (KIALVGKYVE…FVTAAVENMK (243 aa)). Gly-354 provides a ligand contact to L-glutamine. The active-site Nucleophile; for glutamine hydrolysis is the Cys-381. L-glutamine-binding positions include 382–385 (LGMQ), Glu-405, and Arg-463. Residues His-508 and Glu-510 contribute to the active site.

It belongs to the CTP synthase family. In terms of assembly, homotetramer.

It catalyses the reaction UTP + L-glutamine + ATP + H2O = CTP + L-glutamate + ADP + phosphate + 2 H(+). The enzyme catalyses L-glutamine + H2O = L-glutamate + NH4(+). The catalysed reaction is UTP + NH4(+) + ATP = CTP + ADP + phosphate + 2 H(+). The protein operates within pyrimidine metabolism; CTP biosynthesis via de novo pathway; CTP from UDP: step 2/2. Its activity is regulated as follows. Allosterically activated by GTP, when glutamine is the substrate; GTP has no effect on the reaction when ammonia is the substrate. The allosteric effector GTP functions by stabilizing the protein conformation that binds the tetrahedral intermediate(s) formed during glutamine hydrolysis. Inhibited by the product CTP, via allosteric rather than competitive inhibition. Functionally, catalyzes the ATP-dependent amination of UTP to CTP with either L-glutamine or ammonia as the source of nitrogen. Regulates intracellular CTP levels through interactions with the four ribonucleotide triphosphates. This is CTP synthase from Streptococcus agalactiae serotype Ia (strain ATCC 27591 / A909 / CDC SS700).